Consider the following 561-residue polypeptide: MTRNQLHNWLNAGFFGLLLLLIHVQGQDSPEANPIRNTHTGQIQGSLIHVKDTKAGVHTFLGIPFAKPPVGPLRFAPPEAPEPWSGVRDGTAHPAMCLQNLDMLNEAGLPDMKMMLSSFPMSEDCLYLNIYTPAHAHEGSNLPVMVWIHGGALVIGMASMFDGSLLTVNEDLVVVTIQYRLGVLGFFSTGDQHARGNWGYLDQAAALRWVQQNIAHFGGNPDRVTIFGESAGGTSVSSHVVSPMSQGLFHGAIMESGVALLPDLISETSEMVSTTVAKLSGCEAMDSQALVRCLRGKSEAEILAINKVFKMIPAVVDGEFFPRHPKELLASEDFHPVPSIIGVNNDEFGWSIPVVMGSAQMIKGITRENLQAVLKDTAVQMMLPPECSDLLMEEYMGDTEDAQTLQIQFTEMMGDFMFVIPALQVAHFQRSHAPVYFYEFQHPPSYFKDVRPPHVKADHADEIPFVFASFFWGMKLDFTEEEELLSRRMMKYWANFARHGNPNSEGLPYWPVMDHDEQYLQLDIQPAVGRALKAGRLQFWTKTLPQKIQELKASQDKHREL.

A signal peptide spans methionine 1–glycine 26. An intrachain disulfide couples cysteine 97 to cysteine 125. Serine 230 acts as the Acyl-ester intermediate in catalysis. Residues cysteine 282 and cysteine 293 are joined by a disulfide bond. Catalysis depends on charge relay system residues glutamate 347 and histidine 459. The short motif at histidine 558–leucine 561 is the Prevents secretion from ER element.

The protein belongs to the type-B carboxylesterase/lipase family. As to expression, detected in liver (at protein level).

It is found in the microsome. Its subcellular location is the endoplasmic reticulum. It carries out the reaction an O-acyl-(R)-carnitine + H2O = (R)-carnitine + a fatty acid + H(+). It catalyses the reaction all-trans-retinyl hexadecanoate + H2O = all-trans-retinol + hexadecanoate + H(+). Hydrolase with high activity towards palmitoylcarnitine. Is also active with p-nitrophenylacetate and alpha-naphthylacetate. May also hydrolyze retinyl esters. This is Acylcarnitine hydrolase from Mus musculus (Mouse).